A 409-amino-acid chain; its full sequence is Elongation factor Tu, cyanelle (409 aa).

The 205-residue stretch at 10-214 (KPHVNIGTIG…AVDEYIPTPE (205 aa)) folds into the tr-type G domain. Positions 19–26 (GHVDHGKT) are G1. 19–26 (GHVDHGKT) lines the GTP pocket. Position 26 (Thr26) interacts with Mg(2+). The segment at 60 to 64 (GITIN) is G2. Positions 81 to 84 (DCPG) are G3. GTP-binding positions include 81–85 (DCPGH) and 136–139 (NKED). Positions 136-139 (NKED) are G4. A G5 region spans residues 174–176 (SAL).

This sequence belongs to the TRAFAC class translation factor GTPase superfamily. Classic translation factor GTPase family. EF-Tu/EF-1A subfamily.

It is found in the plastid. The protein resides in the cyanelle. It catalyses the reaction GTP + H2O = GDP + phosphate + H(+). Its function is as follows. GTP hydrolase that promotes the GTP-dependent binding of aminoacyl-tRNA to the A-site of ribosomes during protein biosynthesis. The sequence is that of Elongation factor Tu, cyanelle (tufA) from Cyanophora paradoxa.